The chain runs to 357 residues: Peptide chain release factor 1 (357 aa).

Residue Gln236 is modified to N5-methylglutamine.

Belongs to the prokaryotic/mitochondrial release factor family. Post-translationally, methylated by PrmC. Methylation increases the termination efficiency of RF1.

It is found in the cytoplasm. Its function is as follows. Peptide chain release factor 1 directs the termination of translation in response to the peptide chain termination codons UAG and UAA. This is Peptide chain release factor 1 from Mycolicibacterium gilvum (strain PYR-GCK) (Mycobacterium gilvum (strain PYR-GCK)).